The primary structure comprises 422 residues: Phosphoglycerate kinase (422 aa).

Substrate-binding positions include 24 to 26, 64 to 67, R129, and R171; these read DLN and HLGR. Residues K222, G309, E340, and 370–373 contribute to the ATP site; that span reads DIDT.

Belongs to the phosphoglycerate kinase family. Monomer.

The protein resides in the cytoplasm. The catalysed reaction is (2R)-3-phosphoglycerate + ATP = (2R)-3-phospho-glyceroyl phosphate + ADP. The protein operates within carbohydrate degradation; glycolysis; pyruvate from D-glyceraldehyde 3-phosphate: step 2/5. The sequence is that of Phosphoglycerate kinase (pgk) from Ureaplasma parvum serovar 3 (strain ATCC 700970).